A 342-amino-acid polypeptide reads, in one-letter code: Ribosomal RNA small subunit methyltransferase C (342 aa).

It belongs to the methyltransferase superfamily. RsmC family. As to quaternary structure, monomer.

The protein resides in the cytoplasm. The catalysed reaction is guanosine(1207) in 16S rRNA + S-adenosyl-L-methionine = N(2)-methylguanosine(1207) in 16S rRNA + S-adenosyl-L-homocysteine + H(+). Functionally, specifically methylates the guanine in position 1207 of 16S rRNA in the 30S particle. The chain is Ribosomal RNA small subunit methyltransferase C from Enterobacter sp. (strain 638).